Reading from the N-terminus, the 416-residue chain is Transmembrane protease serine 11B (416 aa).

At methionine 1–threonine 17 the chain is on the cytoplasmic side. The chain crosses the membrane as a helical; Signal-anchor for type II membrane protein span at residues isoleucine 18 to phenylalanine 38. The Extracellular portion of the chain corresponds to leucine 39–leucine 416. In terms of domain architecture, SEA spans lysine 43–lysine 160. Asparagine 72 and asparagine 107 each carry an N-linked (GlcNAc...) asparagine glycan. The Peptidase S1 domain maps to isoleucine 185–glycine 415. The cysteines at positions 210 and 226 are disulfide-linked. Catalysis depends on charge relay system residues histidine 225 and aspartate 270. Residue asparagine 315 is glycosylated (N-linked (GlcNAc...) asparagine). Disulfide bonds link cysteine 335–cysteine 351 and cysteine 362–cysteine 391. The Charge relay system role is filled by serine 366.

It belongs to the peptidase S1 family.

It is found in the cell membrane. With respect to regulation, inhibited by aprotinin, leupeptin, benzamidine, SERPINA1, SPINT1 and SPINT2. Serine protease. In Homo sapiens (Human), this protein is Transmembrane protease serine 11B (TMPRSS11B).